The chain runs to 195 residues: Protein LIGHT-DEPENDENT SHORT HYPOCOTYLS 4 (195 aa).

The segment covering 28–38 (TTTSSSSSSSS) has biased composition (low complexity). 2 disordered regions span residues 28–51 (TTTSSSSSSSSGGSGTNQLSRYEN) and 162–195 (SQAKARGISYEKKKRKRPPPPLPPAQPAISSSPN). The ALOG domain occupies 48–175 (RYENQKRRDW…ARGISYEKKK (128 aa)). The Nuclear localization signal signature appears at 173-177 (KKKRK).

It belongs to the plant homeotic and developmental regulators ALOG protein family. As to expression, induced by NAC054/CUC1 and NAC098/CUC2 in shoot organ boundary cells.

The protein resides in the nucleus. Probable transcription regulator that acts as a developmental regulator by promoting cell growth in response to light. May suppress organ differentiation in the boundary region. This Arabidopsis thaliana (Mouse-ear cress) protein is Protein LIGHT-DEPENDENT SHORT HYPOCOTYLS 4 (LSH4).